A 41-amino-acid polypeptide reads, in one-letter code: MKVRSSLKSLKTRHRDCKLVRRKGRVYVINKTDPRFKAKQG.

It belongs to the bacterial ribosomal protein bL36 family.

The sequence is that of Large ribosomal subunit protein bL36 from Phenylobacterium zucineum (strain HLK1).